The following is a 205-amino-acid chain: MAASTASHRPIKGILKNKTSTTSSMVASAEQPRGNVDEELSKKSQKWDEMNILATYHPADKDYGLMKIDEPSTPYHSMMGDDEDACSDTEATEAMAPDILARKLAAAEGLEPKYRIQEQESSGEEDSDLSPEEREKKRQFEMKRKLHYNEGLNIKLARQLISKDLHDDDEDEEMLETADGESMNTEESNQGSTPSDQQQNKLRSS.

Positions 1–44 (MAASTASHRPIKGILKNKTSTTSSMVASAEQPRGNVDEELSKKS) are disordered. Ala2 bears the N-acetylalanine mark. Required for binding PPP1CC stretches follow at residues 12–17 (KGILKN) and 43–55 (KSQKWDEMNILAT). Over residues 17 to 26 (NKTSTTSSMV) the composition is skewed to polar residues. The segment covering 35–44 (NVDEELSKKS) has biased composition (basic and acidic residues). At Ser44 the chain carries Phosphoserine; by ATM. Position 73 is a phosphothreonine; by GSK3 (Thr73). Ser87 carries the post-translational modification Phosphoserine. Residues Thr89 and Thr92 each carry the phosphothreonine modification. Residues 111-142 (EPKYRIQEQESSGEEDSDLSPEEREKKRQFEM) are disordered. 4 positions are modified to phosphoserine: Ser121, Ser122, Ser127, and Ser130. Over residues 121 to 130 (SSGEEDSDLS) the composition is skewed to acidic residues. Residues 131-142 (PEEREKKRQFEM) show a composition bias toward basic and acidic residues. The segment at 147-150 (HYNE) is required for binding PPP1CC catalytic center, displacing metal ions and inhibition of PPP1CC catalytic activity. The tract at residues 163-205 (KDLHDDDEDEEMLETADGESMNTEESNQGSTPSDQQQNKLRSS) is disordered. Positions 167-179 (DDDEDEEMLETAD) are enriched in acidic residues. Over residues 182–205 (SMNTEESNQGSTPSDQQQNKLRSS) the composition is skewed to polar residues.

It belongs to the protein phosphatase inhibitor 2 family. As to quaternary structure, heterodimer with PP1. In terms of processing, phosphorylation on Thr-73 by GSK3 activates PP1 by dissociating the PP1-PPP1R2 complex. Phosphorylation on Ser-44 by ATM activates PP1 by dissociating the PP1-PPP1R2 complex.

Its function is as follows. Inhibitor of protein-phosphatase 1. The sequence is that of Protein phosphatase inhibitor 2 (PPP1R2) from Homo sapiens (Human).